We begin with the raw amino-acid sequence, 419 residues long: uncharacterized protein (419 aa).

This is an uncharacterized protein from Schizosaccharomyces pombe (strain 972 / ATCC 24843) (Fission yeast).